The primary structure comprises 347 residues: NADH-ubiquinone oxidoreductase chain 2 (347 aa).

The next 10 membrane-spanning stretches (helical) occupy residues 1–21 (MNPL…LIVM), 25–45 (HWFM…PLLT), 67–87 (SMLL…WSIM), 111–131 (FHFW…LILL), 144–164 (MIMP…SIAI), 178–198 (IMAY…AYNP), 201–221 (TLLN…LLMI), 237–257 (LPLI…LPPL), 274–294 (SSII…YFYT), and 326–346 (LPLM…MPIL).

Belongs to the complex I subunit 2 family. As to quaternary structure, core subunit of respiratory chain NADH dehydrogenase (Complex I) which is composed of 45 different subunits. Interacts with TMEM242.

Its subcellular location is the mitochondrion inner membrane. The enzyme catalyses a ubiquinone + NADH + 5 H(+)(in) = a ubiquinol + NAD(+) + 4 H(+)(out). In terms of biological role, core subunit of the mitochondrial membrane respiratory chain NADH dehydrogenase (Complex I) which catalyzes electron transfer from NADH through the respiratory chain, using ubiquinone as an electron acceptor. Essential for the catalytic activity and assembly of complex I. In Myotis simus (Velvety myotis), this protein is NADH-ubiquinone oxidoreductase chain 2.